The primary structure comprises 464 residues: ATP-dependent protease ATPase subunit HslU (464 aa).

ATP contacts are provided by residues isoleucine 19, 61–66, aspartate 277, glutamate 342, and arginine 414; that span reads GVGKTE.

It belongs to the ClpX chaperone family. HslU subfamily. As to quaternary structure, a double ring-shaped homohexamer of HslV is capped on each side by a ring-shaped HslU homohexamer. The assembly of the HslU/HslV complex is dependent on binding of ATP.

The protein localises to the cytoplasm. Its function is as follows. ATPase subunit of a proteasome-like degradation complex; this subunit has chaperone activity. The binding of ATP and its subsequent hydrolysis by HslU are essential for unfolding of protein substrates subsequently hydrolyzed by HslV. HslU recognizes the N-terminal part of its protein substrates and unfolds these before they are guided to HslV for hydrolysis. This is ATP-dependent protease ATPase subunit HslU from Lactobacillus gasseri (strain ATCC 33323 / DSM 20243 / BCRC 14619 / CIP 102991 / JCM 1131 / KCTC 3163 / NCIMB 11718 / NCTC 13722 / AM63).